The chain runs to 298 residues: Cyclin-dependent kinase 2 homolog (298 aa).

The region spanning 4–284 (YHKMEKIGEG…AKEALKHDYF (281 aa)) is the Protein kinase domain. ATP-binding positions include 10–18 (IGEGTYGVV) and Lys-32. Thr-14 carries the phosphothreonine modification. The residue at position 15 (Tyr-15) is a Phosphotyrosine. Asp-125 (proton acceptor) is an active-site residue. At Thr-158 the chain carries Phosphothreonine.

It belongs to the protein kinase superfamily. CMGC Ser/Thr protein kinase family. CDC2/CDKX subfamily. In terms of assembly, may form a complex composed of at least the catalytic subunit CRK2 and a cyclin. Requires Mg(2+) as cofactor.

The protein localises to the cytoplasm. The enzyme catalyses L-seryl-[protein] + ATP = O-phospho-L-seryl-[protein] + ADP + H(+). It carries out the reaction L-threonyl-[protein] + ATP = O-phospho-L-threonyl-[protein] + ADP + H(+). The catalysed reaction is [DNA-directed RNA polymerase] + ATP = phospho-[DNA-directed RNA polymerase] + ADP + H(+). With respect to regulation, phosphorylation at Thr-14 or Tyr-15 inactivates the enzyme, while phosphorylation at Thr-158 activates it. In terms of biological role, serine/threonine-protein kinase. Involved in the control of the cell cycle. Required for entry into S-phase and mitosis. Probable component of the kinase complex that phosphorylates the repetitive C-terminus of RNA polymerase II. This is Cyclin-dependent kinase 2 homolog from Theileria annulata.